A 124-amino-acid polypeptide reads, in one-letter code: Small ribosomal subunit protein uS12 (124 aa).

Residue Asp-89 is modified to 3-methylthioaspartic acid.

Belongs to the universal ribosomal protein uS12 family. As to quaternary structure, part of the 30S ribosomal subunit. Contacts proteins S8 and S17. May interact with IF1 in the 30S initiation complex.

With S4 and S5 plays an important role in translational accuracy. Functionally, interacts with and stabilizes bases of the 16S rRNA that are involved in tRNA selection in the A site and with the mRNA backbone. Located at the interface of the 30S and 50S subunits, it traverses the body of the 30S subunit contacting proteins on the other side and probably holding the rRNA structure together. The combined cluster of proteins S8, S12 and S17 appears to hold together the shoulder and platform of the 30S subunit. This Buchnera aphidicola subsp. Acyrthosiphon pisum (strain 5A) protein is Small ribosomal subunit protein uS12.